A 516-amino-acid chain; its full sequence is Cytochrome P450 monooxygenase otaC (516 aa).

The helical transmembrane segment at 13 to 30 (FLWTAFAVGVVYCCTRMV) threads the bilayer. A heme-binding site is contributed by Cys454.

It belongs to the cytochrome P450 family. Heme serves as cofactor.

Its subcellular location is the membrane. The catalysed reaction is 7-methylmellein + 3 reduced [NADPH--hemoprotein reductase] + 3 O2 = 7-carboxymellein + 3 oxidized [NADPH--hemoprotein reductase] + 4 H2O + 4 H(+). The protein operates within mycotoxin biosynthesis. Functionally, cytochrome P450 monooxygenase; part of the gene cluster that mediates the biosynthesis of ochratoxin A (OTA), a mycotoxin composed of a chlorinated type I polyketide dihydroisocoumarin moiety linked to L-phenylalanine, and demonstrated to have nephrotoxic, immunotoxic, genotoxic, neurotoxic, and teratogenic properties. OtaC catalyzes the oxidation of 7-methylmellein (7-MM) into 7-carboxymellein. The pathway begins with the highly reducing polyketide synthase otaA that catalyzes the formation of the isocoumarin group during the initial stages of biosynthesis, starting from one acetate and 4 malonate units, to originate the characteristic pentaketide skeleton 7-methylmellein (7-MM) of the OTA molecule. The newly identified cyclase otaY might be involved in the polyketide cyclization reaction during the initial steps of the OTA biosynthesis. 7-MM is then oxidized into 7-carboxymellein (also called ochratoxin beta) by the cytochrome P450 monooxygenase otaC. The NRPS encoded by the otaB gene is involved in the linking of phenylalanine to the dihydroisocoumarin ring. The reaction catalyzed by NRPS results in the production of ochratoxin B (OTB), which is the non-chlorinated analog of OTA and which subsequently serves as the substrate of the halogenase otaD for chlorination activity to form the final molecular structure of OTA, containing a chlorine atom in the C-5 position of the molecule. The sequence is that of Cytochrome P450 monooxygenase otaC from Aspergillus carbonarius (strain ITEM 5010).